Consider the following 780-residue polypeptide: MATVDLEKLRMSGAGKAIGVLTSGGDAQGMNAAVRAVTRMGIYVGAKVFLIYEGYEGLVEGGENIKPANWLSVSNIIQLGGTIIGSARCKAFTTREGRLAAAYNLLQHGITNLCVIGGDGSLTGANIFRNEWGSLLEELVKEGKISESTAQNYAHLTIAGLVGSIDNDFCGTDMTIGTDSALHRIMEVIDAITTTAQSHQRTFVLEVMGRHCGYLALVSALASGADWLFIPEAPPEDGWENFMCERLGETRSRGSRLNIIIIAEGAIDRHGKPISSSYVKDLVVQRLGFDTRVTVLGHVQRGGTPSAFDRILSSKMGMEAVMALLEATPDTPACVVSLSGNQSVRLPLMECVQVTKDVQKAMDEERFDEAIQLRGRSFENNWKIYKLLAHQKVSKEKSNFSLAILNVGAPAAGMNAAVRSAVRTGISEGHTVYIVHDGFEGLAKGQVQEVGWHDVAGWLGRGGSMLGTKRTLPKPHLEAIVENLRTYNIHALLVIGGFEAYEGVLQLVEARGRYEELCIVMCVIPATISNNVPGTDFSLGSDTAVNAAMESCDRIKQSASGTKRRVFIVETMGGYCGYLATVTGIAVGADAAYVFEDPFNIHDLKANVEHMTEKMKTDIQRGLVLRNEKCHEHYTTEFLYNLYSSEGRGVFDCRTNVLGHLQQGGAPTPFDRNYGTKLGVKAMLWVSEKLRDVYRKGRVFANAPDSACVIGLRKKVVAFSPVTELKKETDFEHRMPREQWWLNLRLMLKMLAHYRISMADYVSGELEHVTRRTLSIDKGF.

A2 is modified (N-acetylalanine). Residues A2–H390 are N-terminal catalytic PFK domain 1. ATP contacts are provided by residues G25, R88–C89, and G118–S121. D119 is a Mg(2+) binding site. Residues S164–D166, R201, M208–R210, E264, R292, and H298–R301 each bind substrate. D166 (proton acceptor) is an active-site residue. A Phosphoserine modification is found at S377. An interdomain linker region spans residues Q391–F400. Residues S401–F780 form a C-terminal regulatory PFK domain 2 region. Beta-D-fructose 2,6-bisphosphate-binding positions include R470, T527–N531, R565, M572–G574, and E628. A glycan (O-linked (GlcNAc) serine) is linked at S529. Y640 bears the Phosphotyrosine mark. Beta-D-fructose 2,6-bisphosphate-binding positions include R654, H660–Q663, and R734. The residue at position 775 (S775) is a Phosphoserine.

It belongs to the phosphofructokinase type A (PFKA) family. ATP-dependent PFK group I subfamily. Eukaryotic two domain clade 'E' sub-subfamily. In terms of assembly, homo- and heterotetramers. Phosphofructokinase (PFK) enzyme functions as a tetramer composed of different combinations of 3 types of subunits, called PFKM (M), PFKL (L) and PFKP (P). The composition of the PFK tetramer differs according to the tissue type it is present in. The kinetic and regulatory properties of the tetrameric enzyme are dependent on the subunit composition, hence can vary across tissues. It depends on Mg(2+) as a cofactor. GlcNAcylation at Ser-529 by OGT decreases enzyme activity, leading to redirect glucose flux through the oxidative pentose phosphate pathway. Glycosylation is stimulated by both hypoxia and glucose deprivation.

The protein localises to the cytoplasm. The enzyme catalyses beta-D-fructose 6-phosphate + ATP = beta-D-fructose 1,6-bisphosphate + ADP + H(+). It functions in the pathway carbohydrate degradation; glycolysis; D-glyceraldehyde 3-phosphate and glycerone phosphate from D-glucose: step 3/4. Allosterically activated by ADP, AMP, or fructose 2,6-bisphosphate, and allosterically inhibited by ATP or citrate. GlcNAcylation by OGT overcomes allosteric regulation. Functionally, catalyzes the phosphorylation of D-fructose 6-phosphate to fructose 1,6-bisphosphate by ATP, the first committing step of glycolysis. Negatively regulates the phagocyte oxidative burst in response to bacterial infection by controlling cellular NADPH biosynthesis and NADPH oxidase-derived reactive oxygen species. Upon macrophage activation, drives the metabolic switch toward glycolysis, thus preventing glucose turnover that produces NADPH via pentose phosphate pathway. The sequence is that of ATP-dependent 6-phosphofructokinase, liver type from Mus musculus (Mouse).